The sequence spans 239 residues: MSTALSVFVTGTDTEIGKTFVSAAMLHGFARHGLRAAALKPVAAGAYERDGIWRNEDADQLDAAANVALPPELRTPFLLKAPAAPHIVAAHEGVTLDIDTIVASHREALTRANVVVVEGVGGFRVPLNDTQDTADLAVALGLPVVLVVGIRLGCISHALLTADAIRQRGLTLAGWVANHVDPAMSYADENVATIRDWLAREHRAPLLGRVAHLRPAAPESAAAMLDIAALVDTLRRAQH.

Residue 15-20 coordinates ATP; it reads EIGKTF. Mg(2+) is bound at residue Thr19. The active site involves Lys40. Residues Asp57, 118 to 121, 178 to 179, and 211 to 213 contribute to the ATP site; these read EGVG, NH, and AHL. 2 residues coordinate Mg(2+): Asp57 and Glu118.

The protein belongs to the dethiobiotin synthetase family. In terms of assembly, homodimer. Requires Mg(2+) as cofactor.

The protein resides in the cytoplasm. It catalyses the reaction (7R,8S)-7,8-diammoniononanoate + CO2 + ATP = (4R,5S)-dethiobiotin + ADP + phosphate + 3 H(+). Its pathway is cofactor biosynthesis; biotin biosynthesis; biotin from 7,8-diaminononanoate: step 1/2. Functionally, catalyzes a mechanistically unusual reaction, the ATP-dependent insertion of CO2 between the N7 and N8 nitrogen atoms of 7,8-diaminopelargonic acid (DAPA, also called 7,8-diammoniononanoate) to form a ureido ring. The protein is ATP-dependent dethiobiotin synthetase BioD of Burkholderia vietnamiensis (strain G4 / LMG 22486) (Burkholderia cepacia (strain R1808)).